A 305-amino-acid polypeptide reads, in one-letter code: NADH-cytochrome b5 reductase 1 (305 aa).

The chain crosses the membrane as a helical span at residues 8–28; it reads VLLASLGVGLFTLFGLALGTY. The FAD-binding FR-type domain maps to 44 to 156; the sequence is DEKYLLRLLD…RGPSGLLSYA (113 aa). Residues 136 to 166 and 175 to 210 contribute to the FAD site; these read DSLKIGDVVEFRGPSGLLSYAGKGNFNIQPN and VAKKLGMIAGGTGITPMLQLIRAILKVPEDPTQCFL.

The protein belongs to the flavoprotein pyridine nucleotide cytochrome reductase family. It depends on FAD as a cofactor.

It localises to the membrane. The enzyme catalyses 2 Fe(III)-[cytochrome b5] + NADH = 2 Fe(II)-[cytochrome b5] + NAD(+) + H(+). NADH-cytochrome b5 reductases are involved in desaturation and elongation of fatty acids, cholesterol biosynthesis, drug metabolism, and, in erythrocyte, methemoglobin reduction. The polypeptide is NADH-cytochrome b5 reductase 1 (Cyb5r1) (Rattus norvegicus (Rat)).